Here is a 144-residue protein sequence, read N- to C-terminus: Ribosomal RNA large subunit methyltransferase H (144 aa).

Residues glycine 92 and leucine 111–phenylalanine 116 each bind S-adenosyl-L-methionine.

The protein belongs to the RNA methyltransferase RlmH family. In terms of assembly, homodimer.

Its subcellular location is the cytoplasm. It catalyses the reaction pseudouridine(1915) in 23S rRNA + S-adenosyl-L-methionine = N(3)-methylpseudouridine(1915) in 23S rRNA + S-adenosyl-L-homocysteine + H(+). Functionally, specifically methylates the pseudouridine at position 1915 (m3Psi1915) in 23S rRNA. This is Ribosomal RNA large subunit methyltransferase H from Synechococcus sp. (strain CC9311).